The sequence spans 180 residues: Bifunctional protein PyrR (180 aa).

The PRPP-binding signature appears at 101 to 113; sequence VILVDDVLYTGRT.

It belongs to the purine/pyrimidine phosphoribosyltransferase family. PyrR subfamily. As to quaternary structure, homodimer and homohexamer; in equilibrium.

It carries out the reaction UMP + diphosphate = 5-phospho-alpha-D-ribose 1-diphosphate + uracil. In terms of biological role, regulates transcriptional attenuation of the pyrimidine nucleotide (pyr) operon by binding in a uridine-dependent manner to specific sites on pyr mRNA. This disrupts an antiterminator hairpin in the RNA and favors formation of a downstream transcription terminator, leading to a reduced expression of downstream genes. Functionally, also displays a weak uracil phosphoribosyltransferase activity which is not physiologically significant. This Bacillus thuringiensis subsp. konkukian (strain 97-27) protein is Bifunctional protein PyrR.